The following is a 238-amino-acid chain: Ribonuclease 3 (238 aa).

An RNase III domain is found at 11-136 (RARLEAAIGY…LIAAIYLDGG (126 aa)). Mg(2+) is bound at residue glutamate 49. Aspartate 53 is a catalytic residue. Positions 122 and 125 each coordinate Mg(2+). Residue glutamate 125 is part of the active site. A DRBM domain is found at 161 to 230 (DAKTELQEWA…AMKLLEREGV (70 aa)). Residues 180 to 193 (YRTEDRSGPDHDPR) are compositionally biased toward basic and acidic residues. Residues 180–215 (YRTEDRSGPDHDPRFTVTVEVDGIDPETGVDRSKRG) form a disordered region.

It belongs to the ribonuclease III family. In terms of assembly, homodimer. Mg(2+) serves as cofactor.

It localises to the cytoplasm. It catalyses the reaction Endonucleolytic cleavage to 5'-phosphomonoester.. Digests double-stranded RNA. Involved in the processing of primary rRNA transcript to yield the immediate precursors to the large and small rRNAs (23S and 16S). Processes some mRNAs, and tRNAs when they are encoded in the rRNA operon. Processes pre-crRNA and tracrRNA of type II CRISPR loci if present in the organism. In Sinorhizobium medicae (strain WSM419) (Ensifer medicae), this protein is Ribonuclease 3.